The following is a 232-amino-acid chain: tRNA (guanine-N(1)-)-methyltransferase (232 aa).

S-adenosyl-L-methionine-binding positions include glycine 112 and 132–137 (IGDYVL).

This sequence belongs to the RNA methyltransferase TrmD family. As to quaternary structure, homodimer.

It localises to the cytoplasm. It catalyses the reaction guanosine(37) in tRNA + S-adenosyl-L-methionine = N(1)-methylguanosine(37) in tRNA + S-adenosyl-L-homocysteine + H(+). In terms of biological role, specifically methylates guanosine-37 in various tRNAs. The chain is tRNA (guanine-N(1)-)-methyltransferase from Anaplasma phagocytophilum (strain HZ).